A 271-amino-acid polypeptide reads, in one-letter code: Phosphate import ATP-binding protein PstB (271 aa).

An ABC transporter domain is found at Phe25 to Ile266. Residue Gly57–Ser64 participates in ATP binding.

Belongs to the ABC transporter superfamily. Phosphate importer (TC 3.A.1.7) family. As to quaternary structure, the complex is composed of two ATP-binding proteins (PstB), two transmembrane proteins (PstC and PstA) and a solute-binding protein (PstS).

It localises to the cell membrane. The catalysed reaction is phosphate(out) + ATP + H2O = ADP + 2 phosphate(in) + H(+). Functionally, part of the ABC transporter complex PstSACB involved in phosphate import. Responsible for energy coupling to the transport system. The protein is Phosphate import ATP-binding protein PstB of Bacillus cereus (strain ATCC 14579 / DSM 31 / CCUG 7414 / JCM 2152 / NBRC 15305 / NCIMB 9373 / NCTC 2599 / NRRL B-3711).